A 335-amino-acid polypeptide reads, in one-letter code: Galactosylgalactosylxylosylprotein 3-beta-glucuronosyltransferase 3 (335 aa).

Over 1-7 (MKLKLKN) the chain is Cytoplasmic. The chain crosses the membrane as a helical; Signal-anchor for type II membrane protein span at residues 8-28 (VFLAYFLVSIAGLLYALVQLG). At 29-335 (QPCDCLPPLR…GQGSDPAIEV (307 aa)) the chain is on the lumenal side. Asp196 provides a ligand contact to Mn(2+). Glu281 acts as the Proton acceptor in catalysis. Asn300 carries N-linked (GlcNAc...) asparagine glycosylation. Residues 312-322 (EKPKMKQEEQL) show a composition bias toward basic and acidic residues. Positions 312–335 (EKPKMKQEEQLQRQGQGSDPAIEV) are disordered.

Belongs to the glycosyltransferase 43 family. In terms of assembly, homodimer; disulfide-linked. Interacts with PXYLP1; the interaction increases the 2-phosphoxylose phosphatase activity of PXYLP1 during completion of linkage region formation in a B3GAT3-mediated manner. It depends on Mn(2+) as a cofactor. N-glycosylated. As to expression, liver, brain and heart. Moderate expression seen in lung, skeletal muscle, kidney and testis.

Its subcellular location is the golgi apparatus membrane. It localises to the golgi apparatus. It is found in the cis-Golgi network. The catalysed reaction is 3-O-(beta-D-galactosyl-(1-&gt;3)-beta-D-galactosyl-(1-&gt;4)-beta-D-xylosyl)-L-seryl-[protein] + UDP-alpha-D-glucuronate = 3-O-(beta-D-GlcA-(1-&gt;3)-beta-D-Gal-(1-&gt;3)-beta-D-Gal-(1-&gt;4)-beta-D-Xyl)-L-seryl-[protein] + UDP + H(+). Its pathway is protein modification; protein glycosylation. In terms of biological role, glycosaminoglycans biosynthesis. Involved in forming the linkage tetrasaccharide present in heparan sulfate and chondroitin sulfate. Transfers a glucuronic acid moiety from the uridine diphosphate-glucuronic acid (UDP-GlcUA) to the common linkage region trisaccharide Gal-beta-1,3-Gal-beta-1,4-Xyl covalently bound to a Ser residue at the glycosaminylglycan attachment site of proteoglycans. Can also play a role in the biosynthesis of l2/HNK-1 carbohydrate epitope on glycoproteins. Highest activity seen with Gal-beta-1,3-Gal-beta-O-R (where R=naphthalenemethanol or benzyl alcohol). Stimulates 2-phosphoxylose phosphatase activity of PXYLP1 in presence of uridine diphosphate-glucuronic acid (UDP-GlcUA) during completion of linkage region formation. The sequence is that of Galactosylgalactosylxylosylprotein 3-beta-glucuronosyltransferase 3 (B3GAT3) from Cricetulus griseus (Chinese hamster).